Reading from the N-terminus, the 189-residue chain is Small ribosomal subunit protein uS5 (189 aa).

Residues 22 to 85 (FVDKLVAINR…EAAKRELIFV (64 aa)) form the S5 DRBM domain.

It belongs to the universal ribosomal protein uS5 family. Part of the 30S ribosomal subunit. Contacts proteins S4 and S8.

With S4 and S12 plays an important role in translational accuracy. In terms of biological role, located at the back of the 30S subunit body where it stabilizes the conformation of the head with respect to the body. The protein is Small ribosomal subunit protein uS5 of Rhizobium johnstonii (strain DSM 114642 / LMG 32736 / 3841) (Rhizobium leguminosarum bv. viciae).